Reading from the N-terminus, the 555-residue chain is Glypican-6 (555 aa).

The N-terminal stretch at 1–23 (MPSWIGAVILPLLGLLLSLPAGA) is a signal peptide. The span at 348-357 (PALRSARSAP) shows a compositional bias: low complexity. Residues 348–376 (PALRSARSAPENFNTRFRPYNPEERPTTA) are disordered. A lipid anchor (GPI-anchor amidated serine) is attached at serine 529. A propeptide spans 530 to 555 (SAAQRGHSLLSWSLTCIVLALQRLCR) (removed in mature form).

The protein belongs to the glypican family.

It localises to the cell membrane. It is found in the secreted. The protein localises to the extracellular space. Functionally, cell surface proteoglycan that bears heparan sulfate. Putative cell surface coreceptor for growth factors, extracellular matrix proteins, proteases and anti-proteases. Enhances migration and invasion of cancer cells through WNT5A signaling. The polypeptide is Glypican-6 (GPC6) (Pongo abelii (Sumatran orangutan)).